The chain runs to 393 residues: Neuroplastin (393 aa).

A signal peptide spans 1–28 (MSGSSLPGALALSLLLVSGSLLPGPGAA). Ig-like domains follow at residues 29–134 (QNAG…PSIT), 148–234 (PRIV…IEVK), and 237–327 (PDIT…ASVS). Residues 29–338 (QNAGFVKSPM…VLRVRSHLAP (310 aa)) lie on the Extracellular side of the membrane. Cys-52 and Cys-116 are disulfide-bonded. A narpin; mediates binding with FGFR1 and has antidepressant-like activity region spans residues 149-161 (RIVTSEEVIIRDS). Cys-169 and Cys-217 form a disulfide bridge. N-linked (GlcNAc...) asparagine glycans are attached at residues Asn-170, Asn-196, Asn-228, Asn-283, Asn-295, and Asn-316. A disulfide bond links Cys-258 and Cys-315. A helical transmembrane segment spans residues 339-359 (LWPFLGILAEIIILVVIIVVY). The Cytoplasmic portion of the chain corresponds to 360-393 (EKRKRPDEVPDAGPMKTNSTNNHKDKNLRQRNTN). Positions 366-393 (DEVPDAGPMKTNSTNNHKDKNLRQRNTN) are disordered.

In terms of assembly, interacts with ATP2B1; this interaction stabilizes ATP2B1 and increases ATPase activity; this interaction controls T cell calcium homeostasis following T cell activation. Interacts with XKR8; promoting its localization at the cell membrane. Post-translationally, isoform 1 and isoform 2 are N-glycosylated. Isoform 1 is ubiquitously expressed. Isoform 2 is brain-specific. In brain isoform 2 is highly expressed in hippocampus and cerebral cortex and weakly in cerebellum and lower brain regions. In the hippocampus isoform 2 is found in the dentate gyrus and CA1-CA4, the striatum oriens of CA3 shows the higher level.

Its subcellular location is the cell membrane. It is found in the postsynaptic density. Its function is as follows. Probable homophilic and heterophilic cell adhesion molecule involved in long term potentiation at hippocampal excitatory synapses through activation of p38MAPK. May also regulate neurite outgrowth by activating the FGFR1 signaling pathway. May play a role in synaptic plasticity. Also acts as a chaperone for ATP2B1; stabilizes ATP2B1 and increases its ATPase activity. Promotes localization of XKR8 at the cell membrane. This is Neuroplastin (Nptn) from Rattus norvegicus (Rat).